A 103-amino-acid chain; its full sequence is Large ribosomal subunit protein uL23 (103 aa).

This sequence belongs to the universal ribosomal protein uL23 family. Part of the 50S ribosomal subunit. Contacts protein L29, and trigger factor when it is bound to the ribosome.

Functionally, one of the early assembly proteins it binds 23S rRNA. One of the proteins that surrounds the polypeptide exit tunnel on the outside of the ribosome. Forms the main docking site for trigger factor binding to the ribosome. The protein is Large ribosomal subunit protein uL23 of Pelodictyon phaeoclathratiforme (strain DSM 5477 / BU-1).